The following is a 362-amino-acid chain: Aminomethyltransferase (362 aa).

It belongs to the GcvT family. In terms of assembly, the glycine cleavage system is composed of four proteins: P, T, L and H.

The enzyme catalyses N(6)-[(R)-S(8)-aminomethyldihydrolipoyl]-L-lysyl-[protein] + (6S)-5,6,7,8-tetrahydrofolate = N(6)-[(R)-dihydrolipoyl]-L-lysyl-[protein] + (6R)-5,10-methylene-5,6,7,8-tetrahydrofolate + NH4(+). The glycine cleavage system catalyzes the degradation of glycine. This chain is Aminomethyltransferase, found in Listeria innocua serovar 6a (strain ATCC BAA-680 / CLIP 11262).